We begin with the raw amino-acid sequence, 1146 residues long: Lysine-specific demethylase 2A (1146 aa).

A JmjC domain is found at 146 to 314; that stretch reads FSHTKLENLV…MQLRIYSIED (169 aa). Thr207 provides a ligand contact to substrate. Fe cation-binding residues include His210 and Asp212. Lys227 serves as a coordination point for substrate. His282 is a binding site for Fe cation. Disordered stretches follow at residues 363–467 and 554–585; these read LNGR…PDSP and TKPH…SSGA. Over residues 373–387 the composition is skewed to low complexity; the sequence is SSSSSSSSSGLSSSS. Positions 388–401 are enriched in acidic residues; the sequence is DNDDSSDQDWEEEE. The segment covering 402 to 442 has biased composition (basic and acidic residues); the sequence is GLRKRERDRCRVERELQRKRNRDRQQRDQERDRHGRTERII. A compositionally biased stretch (pro residues) spans 453-467; it reads LTPPPSLPLPTPDSP. Low complexity predominate over residues 566 to 584; sequence STAPPRTSGTPSGTTASSG. The CXXC-type zinc finger occupies 585–631; it reads ARRRRVRCRKCQACVQRECGTCHYCKDMKKFGGPGRMKQSCVLRQCL. Residues Cys592, Cys595, Cys598, Cys603, Cys606, Cys609, Cys625, and Cys630 each contribute to the Zn(2+) site. The PHD-type zinc finger occupies 638–699; sequence SVTCALCGEV…YWECPKCYEG (62 aa). Disordered regions lie at residues 733–800 and 832–867; these read VLRP…EGDR and TPNP…ENVM. Positions 739–762 are enriched in pro residues; that stretch reads GQSPPSPPLLLLPPSPSSAPPTPP. Residues 772–789 show a composition bias toward basic and acidic residues; the sequence is SREERAKRRQLAREKENH. The segment covering 849–864 has biased composition (acidic residues); the sequence is EREEEEEEEEEEEETE. Residues 874–919 form the F-box domain; that stretch reads STSMQKDVWLSVFHYLTHEELCICMRVCKAWYKWGCDKRLWSRIDV. 6 LRR repeats span residues 945–966, 968–994, 1032–1057, 1058–1087, 1088–1112, and 1113–1138; these read WTNV…LKDL, LAGC…DLRW, GLDI…DLSH, CPLL…HLAG, CKGV…DLHG, and CKQV…CLSD.

The protein belongs to the JHDM1 histone demethylase family. It depends on Fe(2+) as a cofactor.

Its subcellular location is the nucleus. It is found in the nucleoplasm. The enzyme catalyses N(6),N(6)-dimethyl-L-lysyl(36)-[histone H3] + 2 2-oxoglutarate + 2 O2 = L-lysyl(36)-[histone H3] + 2 formaldehyde + 2 succinate + 2 CO2. Its function is as follows. Histone demethylase that specifically demethylates 'Lys-36' of histone H3, thereby playing a central role in histone code. Preferentially demethylates dimethylated H3 'Lys-36' residue while it has weak or no activity for mono- and tri-methylated H3 'Lys-36'. May also recognize and bind to some phosphorylated proteins and promote their ubiquitination and degradation. Required to maintain the heterochromatic state. Associates with centromeres and represses transcription of small non-coding RNAs that are encoded by the clusters of satellite repeats at the centromere. Required to sustain centromeric integrity and genomic stability, particularly during mitosis. May play a role in the regulation of circadian gene expression. The sequence is that of Lysine-specific demethylase 2A (kdm2a) from Xenopus tropicalis (Western clawed frog).